The following is a 335-amino-acid chain: Sphingomyelinase C (335 aa).

A signal peptide spans 1 to 28 (MEKFKIIKTIPKICGAFIFLLFFTFLFG).

It belongs to the neutral sphingomyelinase family.

It is found in the secreted. The enzyme catalyses a sphingomyelin + H2O = phosphocholine + an N-acylsphing-4-enine + H(+). Its function is as follows. Virulence factor that promotes intracellular proliferation by mediating the disruption of the phagocytic vacuole and the release of bacteria into the host cell cytosol. May act in concert with the phospholipases PlcA and PlcB and the hemolysin hly to mediate efficient escape from the vacuole. The chain is Sphingomyelinase C (smcL) from Listeria ivanovii.